Here is a 321-residue protein sequence, read N- to C-terminus: Lipoyl synthase (321 aa).

The [4Fe-4S] cluster site is built by Cys-68, Cys-73, Cys-79, Cys-94, Cys-98, Cys-101, and Ser-308. The 218-residue stretch at 80–297 (FNHGTATFMI…KAEALAMGFT (218 aa)) folds into the Radical SAM core domain.

It belongs to the radical SAM superfamily. Lipoyl synthase family. The cofactor is [4Fe-4S] cluster.

It localises to the cytoplasm. It catalyses the reaction [[Fe-S] cluster scaffold protein carrying a second [4Fe-4S](2+) cluster] + N(6)-octanoyl-L-lysyl-[protein] + 2 oxidized [2Fe-2S]-[ferredoxin] + 2 S-adenosyl-L-methionine + 4 H(+) = [[Fe-S] cluster scaffold protein] + N(6)-[(R)-dihydrolipoyl]-L-lysyl-[protein] + 4 Fe(3+) + 2 hydrogen sulfide + 2 5'-deoxyadenosine + 2 L-methionine + 2 reduced [2Fe-2S]-[ferredoxin]. Its pathway is protein modification; protein lipoylation via endogenous pathway; protein N(6)-(lipoyl)lysine from octanoyl-[acyl-carrier-protein]: step 2/2. Catalyzes the radical-mediated insertion of two sulfur atoms into the C-6 and C-8 positions of the octanoyl moiety bound to the lipoyl domains of lipoate-dependent enzymes, thereby converting the octanoylated domains into lipoylated derivatives. The chain is Lipoyl synthase from Edwardsiella ictaluri (strain 93-146).